Consider the following 638-residue polypeptide: DNA mismatch repair protein MutL (638 aa).

The interval 404–433 is disordered; sequence FGTQTNAFGSMATPRDNSRGNYSAGESRQR.

It belongs to the DNA mismatch repair MutL/HexB family.

Its function is as follows. This protein is involved in the repair of mismatches in DNA. It is required for dam-dependent methyl-directed DNA mismatch repair. May act as a 'molecular matchmaker', a protein that promotes the formation of a stable complex between two or more DNA-binding proteins in an ATP-dependent manner without itself being part of a final effector complex. This Shewanella baltica (strain OS195) protein is DNA mismatch repair protein MutL.